The chain runs to 1226 residues: MYGQVERKRVNFGKITNLDYLPNLIQIQKRSFDWFLQADVKDETKRRHQGLEAVFRETFPIESPNNDMIMEYSHYILGEPKRSPQECKDTDATFAMPLKAVIRLIIKETGEIREQTVYMGDLPVMTEQGTFIINGAERVVVSQLHRSPGIFFSYDMERDVFSARVIPYRGSWLEFEMDNKGILIAKIDRKKKFPATLLVKSLGHGTNEEVLRLFYSSKKEKIAGATSKDLKKILGRRTINDIINMETGEVMLEAGSKINEDNISILKEMKVKEVELIEFPKGKDNPILINALEKDGVNDYEDAILKFHSLMRQGEPSTIENATTELTRLFFSPKTFDLGEVGRYKINSKFEFNNPKEFSGEKSRVLRPADIIETVRYILNLFSETENYYPDDIDHLGNRRIRSVGELISNQLKTGFSRVERVIKERMTVQEIETQTPQLLISIKPITAVINEFFGSSQLSQFMDQTNPLAELTHKRRLNALGPGGLSRDRAGMEVRDVHYSHYGRMCPIETPEGPNIGLILSMSSYARVNDYGFLETPYRTVKNGKVTGQIEHLTADKEEYHYIAQASGVIDEKGELKNKLISTRHRGDFPFRNPSEIQYMDLAPLQVVSVSTALIPFLEHDDANRALMGSNMQRQAVPLLREEAPFVGTGMETRAAYDSRICIVNKHDGVVTSVDAENIVVERKGGKESDTYQLTKFKKTNQGTCFNQKPIVGVVHSEINGKVSKVSKEKIEVTGENGELKEYVLQIGSKQYSPIVSAGEEVKRGSTLAGQVVVGEKLDEMGNILVKGTVLADGPAVDNGVLALGRNVLAAFMPWEGYNFEDAILISERIVRDDVFSSIHIEEFEIQARETKLGPEQITRDIPNLSDKAFRDLDETGVIRIGAEVKPGDILVGMVTPKGETDLTPEYKLLHSIFGEKAKDVRDSSLRMPNGFEGTVIDIKRFSRENQDELPAGVEEMVKVFVARKRKLLVGDKMAGRHGNKGVVARVMAEEDMPYMEDGTPLDIVLNPLGVPSRMNLGQIFETQLGFAASKLGISFETPVFDGAEESDVDNFCKEANLPLNSKFKLYDGRTGLPFMNEVFCGYIYILKLAHLVEDKIHARSTGPYSLVTQQPLGGKAQFGGQRLGEMEVWALEAYGASHTLQELLTIKSDDMLGRARIYEAIVKGIHSIKPGIPESFNVLVQELRGLALDIIITDSEGNTVDISDYEDEYSKSKKKIKFETIENA.

This sequence belongs to the RNA polymerase beta chain family. In terms of assembly, the RNAP catalytic core consists of 2 alpha, 1 beta, 1 beta' and 1 omega subunit. When a sigma factor is associated with the core the holoenzyme is formed, which can initiate transcription.

It catalyses the reaction RNA(n) + a ribonucleoside 5'-triphosphate = RNA(n+1) + diphosphate. In terms of biological role, DNA-dependent RNA polymerase catalyzes the transcription of DNA into RNA using the four ribonucleoside triphosphates as substrates. This chain is DNA-directed RNA polymerase subunit beta, found in Leptospira interrogans serogroup Icterohaemorrhagiae serovar copenhageni (strain Fiocruz L1-130).